Consider the following 244-residue polypeptide: Mast cell protease 2 (244 aa).

Residues 1 to 18 (MQALLFLMALLLPSGAGA) form the signal peptide. Residues 19–20 (EE) constitute a propeptide, activation peptide. The Peptidase S1 domain occupies 21-242 (IIGGVEAKPH…YLPWIYKVLK (222 aa)). The N-linked (GlcNAc...) asparagine glycan is linked to asparagine 44. Residues cysteine 50 and cysteine 66 are joined by a disulfide bond. Active-site charge relay system residues include histidine 65 and aspartate 109. Intrachain disulfides connect cysteine 143–cysteine 208 and cysteine 174–cysteine 187. The active-site Charge relay system is the serine 202.

The protein belongs to the peptidase S1 family. Granzyme subfamily. Mucosal mast cells.

This Mus musculus (Mouse) protein is Mast cell protease 2 (Mcpt2).